We begin with the raw amino-acid sequence, 81 residues long: Adipogenin (81 aa).

Residues 16–36 (FLASWLCLPVGLLLFLLIVWL) traverse the membrane as a helical segment.

Belongs to the adipogenin family.

It is found in the membrane. The protein localises to the nucleus. Functionally, plays a role in stimulating adipocyte differentiation and development. This is Adipogenin from Sus scrofa (Pig).